Reading from the N-terminus, the 124-residue chain is Probable glycine cleavage system H protein (124 aa).

The Lipoyl-binding domain maps to 23–104; sequence VATVGITDYA…PYKNWLVKIR (82 aa). K64 carries the post-translational modification N6-lipoyllysine.

This sequence belongs to the GcvH family. The glycine cleavage system is composed of four proteins: P, T, L and H. Requires (R)-lipoate as cofactor.

Its function is as follows. The glycine cleavage system catalyzes the degradation of glycine. The H protein shuttles the methylamine group of glycine from the P protein to the T protein. In Picrophilus torridus (strain ATCC 700027 / DSM 9790 / JCM 10055 / NBRC 100828 / KAW 2/3), this protein is Probable glycine cleavage system H protein.